Consider the following 348-residue polypeptide: Papaya proteinase 4 (348 aa).

The N-terminal stretch at 1–18 is a signal peptide; that stretch reads MAIICSFSKLLFVAICLF. A propeptide spans 19-132 (activation peptide); sequence GHMSLSYCDF…EEFVNEDIVD (114 aa). Disulfide bonds link Cys-154/Cys-195, Cys-188/Cys-227, and Cys-285/Cys-336. Cys-157 is an active-site residue. Catalysis depends on residues His-291 and Asn-311.

Belongs to the peptidase C1 family.

It carries out the reaction Preferential cleavage: Gly-|-Xaa, in proteins and in small molecule substrates.. Its activity is regulated as follows. Not inhibited by cystatin. Thiol protease with a substrate specificity very different from the other thiol proteases. The protein is Papaya proteinase 4 of Carica papaya (Papaya).